The following is a 409-amino-acid chain: Cobalt-precorrin-5B C(1)-methyltransferase (409 aa).

It belongs to the CbiD family.

The enzyme catalyses Co-precorrin-5B + S-adenosyl-L-methionine = Co-precorrin-6A + S-adenosyl-L-homocysteine. It participates in cofactor biosynthesis; adenosylcobalamin biosynthesis; cob(II)yrinate a,c-diamide from sirohydrochlorin (anaerobic route): step 6/10. Functionally, catalyzes the methylation of C-1 in cobalt-precorrin-5B to form cobalt-precorrin-6A. This is Cobalt-precorrin-5B C(1)-methyltransferase from Methanopyrus kandleri (strain AV19 / DSM 6324 / JCM 9639 / NBRC 100938).